The sequence spans 709 residues: Twinkle homolog protein, chloroplastic/mitochondrial (709 aa).

The N-terminal 16 residues, 1 to 16 (MRFLLRLPQIHFRKLS), are a transit peptide targeting the chloroplast and mitochondrion. Residues 280-385 (SEVIIVEGEI…KKSEDEHFKD (106 aa)) enclose the Toprim domain. 3 residues coordinate Mg(2+): E286, D348, and D350. Positions 430–698 (THGHEYGVST…GSYSDSPVTP (269 aa)) constitute an SF4 helicase domain. An ATP-binding site is contributed by 460 to 467 (GIPNSGKS).

Requires Mg(2+) as cofactor. As to expression, expressed in young leaves and shoot apex tissues. Detected in developing tissues such as cotyledons, sepals, pistils and inflorescences. Nearly undetectable in mature leaves.

It localises to the plastid. The protein localises to the chloroplast. The protein resides in the mitochondrion. The catalysed reaction is ATP + H2O = ADP + phosphate + H(+). Has both DNA primase and DNA helicase activities and may be involved in organelle DNA replication. Capable of producing RNA primers of 9 to 18 bases from a single-stranded DNA template. The polypeptide is Twinkle homolog protein, chloroplastic/mitochondrial (Arabidopsis thaliana (Mouse-ear cress)).